The chain runs to 222 residues: Noggin (222 aa).

A signal peptide spans Met1–Leu19. Asn61 carries N-linked (GlcNAc...) asparagine glycosylation. Cystine bridges form between Cys145–Cys182, Cys168–Cys218, Cys174–Cys220, and Cys197–Cys205.

This sequence belongs to the noggin family. As to quaternary structure, homodimer.

It localises to the secreted. In terms of biological role, patterns the embryo by interrupting bone morphogenetic proteins (BMP) signaling. Binds BMP-4 and BMP-2 with high affinity. Can abolish BMP-4 activity by blocking binding to cognate cell-surface receptors. Capable of inducing dorsal development in embryos. Causes dorsal mesodermal differentiation of animal cap ectoderm when coexpressed with xWNT-8 and nuclear, sequence-specific DNA-binding protein xBRA. None of these molecules causes dorsal mesoderm formation when expressed alone. This Xenopus laevis (African clawed frog) protein is Noggin (nog).